Here is a 932-residue protein sequence, read N- to C-terminus: Glycine dehydrogenase (decarboxylating) (932 aa).

Lys-685 carries the N6-(pyridoxal phosphate)lysine modification.

Belongs to the GcvP family. As to quaternary structure, the glycine cleavage system is composed of four proteins: P, T, L and H. Requires pyridoxal 5'-phosphate as cofactor.

It catalyses the reaction N(6)-[(R)-lipoyl]-L-lysyl-[glycine-cleavage complex H protein] + glycine + H(+) = N(6)-[(R)-S(8)-aminomethyldihydrolipoyl]-L-lysyl-[glycine-cleavage complex H protein] + CO2. Functionally, the glycine cleavage system catalyzes the degradation of glycine. The P protein binds the alpha-amino group of glycine through its pyridoxal phosphate cofactor; CO(2) is released and the remaining methylamine moiety is then transferred to the lipoamide cofactor of the H protein. The protein is Glycine dehydrogenase (decarboxylating) of Brucella melitensis biotype 2 (strain ATCC 23457).